The primary structure comprises 518 residues: Chromosomal replication initiator protein DnaA (518 aa).

A domain I, interacts with DnaA modulators region spans residues 1–72; that stretch reads MTLAEFWPLC…VREELAAGRS (72 aa). The interval 72 to 180 is domain II; sequence SAFVFKPGEG…DAEEARYEQT (109 aa). The interval 181–397 is domain III, AAA+ region; the sequence is NLSPDYTFDT…GAFNRVGASS (217 aa). ATP is bound by residues glycine 225, glycine 227, lysine 228, and threonine 229. The segment at 398–518 is domain IV, binds dsDNA; that stretch reads RFMNRPVIDI…YEKLLILIQN (121 aa).

Belongs to the DnaA family. In terms of assembly, oligomerizes as a right-handed, spiral filament on DNA at oriC.

It localises to the cytoplasm. Plays an essential role in the initiation and regulation of chromosomal replication. ATP-DnaA binds to the origin of replication (oriC) to initiate formation of the DNA replication initiation complex once per cell cycle. Binds the DnaA box (a 9 base pair repeat at the origin) and separates the double-stranded (ds)DNA. Forms a right-handed helical filament on oriC DNA; dsDNA binds to the exterior of the filament while single-stranded (ss)DNA is stabiized in the filament's interior. The ATP-DnaA-oriC complex binds and stabilizes one strand of the AT-rich DNA unwinding element (DUE), permitting loading of DNA polymerase. After initiation quickly degrades to an ADP-DnaA complex that is not apt for DNA replication. Binds acidic phospholipids. The sequence is that of Chromosomal replication initiator protein DnaA from Neisseria meningitidis serogroup C / serotype 2a (strain ATCC 700532 / DSM 15464 / FAM18).